A 727-amino-acid polypeptide reads, in one-letter code: NADH-ubiquinone oxidoreductase 75 kDa subunit, mitochondrial (727 aa).

The N-terminal 23 residues, 1–23 (MLRIPVRKALVVLSKSPKGCVRT), are a transit peptide targeting the mitochondrion. Positions 30–108 (NLIEVFVDGQ…GWNILTNSKK (79 aa)) constitute a 2Fe-2S ferredoxin-type domain. Residues Cys64, Cys75, and Cys78 each contribute to the [2Fe-2S] cluster site. Lys84 is subject to N6-acetyllysine. A [2Fe-2S] cluster-binding site is contributed by Cys92. Residues 108–147 (KSKKAREGVMEFLLANHPLDCPICDQGGECDLQDQSMMFG) enclose the 4Fe-4S His(Cys)3-ligated-type domain. His124, Cys128, Cys131, Cys137, Cys176, Cys179, Cys182, and Cys226 together coordinate [4Fe-4S] cluster. The 57-residue stretch at 245 to 301 (TRKTESIDVMDAVGSNIVVSTRTGEVMRILPRMHEDINEEWISDKTRFAYDGLKRQR) folds into the 4Fe-4S Mo/W bis-MGD-type domain. N6-acetyllysine is present on residues Lys467, Lys499, and Lys709.

The protein belongs to the complex I 75 kDa subunit family. In terms of assembly, core subunit of respiratory chain NADH dehydrogenase (Complex I) which is composed of 45 different subunits. This is the largest subunit of complex I and it is a component of the iron-sulfur (IP) fragment of the enzyme. Complex I associates with ubiquinol-cytochrome reductase complex (Complex III) to form supercomplexes. Interacts with MDM2 and AKAP1. The cofactor is [2Fe-2S] cluster. It depends on [4Fe-4S] cluster as a cofactor.

It localises to the mitochondrion inner membrane. The catalysed reaction is a ubiquinone + NADH + 5 H(+)(in) = a ubiquinol + NAD(+) + 4 H(+)(out). Core subunit of the mitochondrial membrane respiratory chain NADH dehydrogenase (Complex I) which catalyzes electron transfer from NADH through the respiratory chain, using ubiquinone as an electron acceptor. Essential for catalysing the entry and efficient transfer of electrons within complex I. Plays a key role in the assembly and stability of complex I and participates in the association of complex I with ubiquinol-cytochrome reductase complex (Complex III) to form supercomplexes. In Pan troglodytes (Chimpanzee), this protein is NADH-ubiquinone oxidoreductase 75 kDa subunit, mitochondrial (NDUFS1).